A 310-amino-acid polypeptide reads, in one-letter code: MSKIIFMGTPDFSTKVLEMLIAEHEVIAVVTQPDRPVGRKKVMTPPPVKRVATKHQIPVYQPEKLKDSQELDVLLSLESDLIVTAAFGQLLPESLLNAPKLGAINVHASLLPKYRGGAPIHQAIIDGEEETGITIMYMVKKLDAGNIISQQSIRIEEEDNVGTMHDKLSFLGAELLKKTLPSIIDNTNDSIPQDDALATFASNIRREDERIDWNMSAQAIHNHIRGLSPWPVAYTTMNEKNLKLFSAFIVKGKKGNPGTIIEATKHELIIATGSDDAIALTEIQPAGKKRMKVTDYLSGVQESLVGKVLL.

109–112 (SLLP) lines the (6S)-5,6,7,8-tetrahydrofolate pocket.

Belongs to the Fmt family.

It carries out the reaction L-methionyl-tRNA(fMet) + (6R)-10-formyltetrahydrofolate = N-formyl-L-methionyl-tRNA(fMet) + (6S)-5,6,7,8-tetrahydrofolate + H(+). In terms of biological role, attaches a formyl group to the free amino group of methionyl-tRNA(fMet). The formyl group appears to play a dual role in the initiator identity of N-formylmethionyl-tRNA by promoting its recognition by IF2 and preventing the misappropriation of this tRNA by the elongation apparatus. In Staphylococcus epidermidis (strain ATCC 35984 / DSM 28319 / BCRC 17069 / CCUG 31568 / BM 3577 / RP62A), this protein is Methionyl-tRNA formyltransferase.